A 129-amino-acid chain; its full sequence is Large ribosomal subunit protein bL19 (129 aa).

The protein belongs to the bacterial ribosomal protein bL19 family.

In terms of biological role, this protein is located at the 30S-50S ribosomal subunit interface and may play a role in the structure and function of the aminoacyl-tRNA binding site. The protein is Large ribosomal subunit protein bL19 of Rhizorhabdus wittichii (strain DSM 6014 / CCUG 31198 / JCM 15750 / NBRC 105917 / EY 4224 / RW1) (Sphingomonas wittichii).